The sequence spans 338 residues: Holliday junction branch migration complex subunit RuvB (338 aa).

The tract at residues 1-181 (MERAITPEKR…FGVISRLEFY (181 aa)) is large ATPase domain (RuvB-L). Residues leucine 20, arginine 21, glycine 62, lysine 65, threonine 66, threonine 67, 128–130 (EDF), arginine 171, tyrosine 181, and arginine 218 each bind ATP. Threonine 66 contributes to the Mg(2+) binding site. The segment at 182–252 (THDELAFIVT…VVQETLRLLE (71 aa)) is small ATPAse domain (RuvB-S). A head domain (RuvB-H) region spans residues 255 to 338 (EMGFDQMDRM…TPERPQGSLF (84 aa)). Positions 310 and 315 each coordinate DNA.

The protein belongs to the RuvB family. In terms of assembly, homohexamer. Forms an RuvA(8)-RuvB(12)-Holliday junction (HJ) complex. HJ DNA is sandwiched between 2 RuvA tetramers; dsDNA enters through RuvA and exits via RuvB. An RuvB hexamer assembles on each DNA strand where it exits the tetramer. Each RuvB hexamer is contacted by two RuvA subunits (via domain III) on 2 adjacent RuvB subunits; this complex drives branch migration. In the full resolvosome a probable DNA-RuvA(4)-RuvB(12)-RuvC(2) complex forms which resolves the HJ.

The protein localises to the cytoplasm. The catalysed reaction is ATP + H2O = ADP + phosphate + H(+). The RuvA-RuvB-RuvC complex processes Holliday junction (HJ) DNA during genetic recombination and DNA repair, while the RuvA-RuvB complex plays an important role in the rescue of blocked DNA replication forks via replication fork reversal (RFR). RuvA specifically binds to HJ cruciform DNA, conferring on it an open structure. The RuvB hexamer acts as an ATP-dependent pump, pulling dsDNA into and through the RuvAB complex. RuvB forms 2 homohexamers on either side of HJ DNA bound by 1 or 2 RuvA tetramers; 4 subunits per hexamer contact DNA at a time. Coordinated motions by a converter formed by DNA-disengaged RuvB subunits stimulates ATP hydrolysis and nucleotide exchange. Immobilization of the converter enables RuvB to convert the ATP-contained energy into a lever motion, pulling 2 nucleotides of DNA out of the RuvA tetramer per ATP hydrolyzed, thus driving DNA branch migration. The RuvB motors rotate together with the DNA substrate, which together with the progressing nucleotide cycle form the mechanistic basis for DNA recombination by continuous HJ branch migration. Branch migration allows RuvC to scan DNA until it finds its consensus sequence, where it cleaves and resolves cruciform DNA. This Trichlorobacter lovleyi (strain ATCC BAA-1151 / DSM 17278 / SZ) (Geobacter lovleyi) protein is Holliday junction branch migration complex subunit RuvB.